A 162-amino-acid polypeptide reads, in one-letter code: Phosphopantetheine adenylyltransferase (162 aa).

Thr10 is a substrate binding site. ATP-binding positions include 10-11 (TF) and His18. Residues Lys42, Leu74, and Arg88 each coordinate substrate. Residues 89-91 (GLR), Glu99, and 124-130 (FSCISST) contribute to the ATP site.

It belongs to the bacterial CoaD family. Homohexamer. Mg(2+) is required as a cofactor.

It localises to the cytoplasm. The enzyme catalyses (R)-4'-phosphopantetheine + ATP + H(+) = 3'-dephospho-CoA + diphosphate. Its pathway is cofactor biosynthesis; coenzyme A biosynthesis; CoA from (R)-pantothenate: step 4/5. Reversibly transfers an adenylyl group from ATP to 4'-phosphopantetheine, yielding dephospho-CoA (dPCoA) and pyrophosphate. In Francisella tularensis subsp. novicida (strain U112), this protein is Phosphopantetheine adenylyltransferase.